The following is a 179-amino-acid chain: Inner membrane-spanning protein YciB (179 aa).

5 helical membrane-spanning segments follow: residues 22 to 42 (IYAA…YSWV), 50 to 70 (MALI…FFHN), 76 to 96 (WKVT…QWVM), 121 to 141 (LAWA…AFWL), and 149 to 169 (FKVF…GVYI).

This sequence belongs to the YciB family.

Its subcellular location is the cell inner membrane. Its function is as follows. Plays a role in cell envelope biogenesis, maintenance of cell envelope integrity and membrane homeostasis. The chain is Inner membrane-spanning protein YciB from Salmonella agona (strain SL483).